A 219-amino-acid chain; its full sequence is Oligoribonuclease (219 aa).

The Exonuclease domain occupies 19-184; sequence LVWVDLEMTG…ADIVESIREL (166 aa). Y141 is an active-site residue.

It belongs to the oligoribonuclease family.

The protein localises to the cytoplasm. In terms of biological role, 3'-to-5' exoribonuclease specific for small oligoribonucleotides. This is Oligoribonuclease from Corynebacterium glutamicum (strain R).